We begin with the raw amino-acid sequence, 187 residues long: Casparian strip membrane protein 5 (187 aa).

Topologically, residues 1-24 (MKSGQAEIVETSKGIQKSGLMSRR) are cytoplasmic. A helical membrane pass occupies residues 25-45 (IAILEFILRIVAFFNTIGSAI). At 46–74 (LMGTTHETLPFFTQFIRFQAEYNDLPALT) the chain is on the extracellular side. The helical transmembrane segment at 75 to 95 (FFVVANAVVSGYLIMSLTLAF) threads the bilayer. Residues 96-107 (VHIVKRKTQNTR) are Cytoplasmic-facing. Residues 108–128 (ILLIVLDVAMLGLLSAGASSA) form a helical membrane-spanning segment. At 129 to 161 (AAIVYLAHNGNNKTNWFAICQQFNSFCERISGS) the chain is on the extracellular side. N140 carries N-linked (GlcNAc...) asparagine glycosylation. The chain crosses the membrane as a helical span at residues 162-182 (LIGSFIAVVLLILLILLSAIA). The Cytoplasmic portion of the chain corresponds to 183–187 (LSRRH).

The protein belongs to the Casparian strip membrane proteins (CASP) family. Homodimer and heterodimers.

It is found in the cell membrane. Regulates membrane-cell wall junctions and localized cell wall deposition. Required for establishment of the Casparian strip membrane domain (CSD) and the subsequent formation of Casparian strips, a cell wall modification of the root endodermis that determines an apoplastic barrier between the intraorganismal apoplasm and the extraorganismal apoplasm and prevents lateral diffusion. The sequence is that of Casparian strip membrane protein 5 from Arabidopsis lyrata subsp. lyrata (Lyre-leaved rock-cress).